We begin with the raw amino-acid sequence, 394 residues long: Na(+)/H(+) antiporter NhaA (394 aa).

Transmembrane regions (helical) follow at residues 11 to 31 (LEAASGILLLVSALLAMIFAN), 59 to 79 (LLMWVNDGFMAVFFILVGMEV), 95 to 115 (IFPAVAALGGMIIPALVYWFI), 125 to 145 (GWAIPMATDIAFALGIVALLS), 155 to 175 (FLLALAIIDDLGAIIVIALFF), 177 to 197 (HEMSMQALTIASIAIVILVAM), 203 to 220 (TGLINYAIIGTILWASVL), 254 to 274 (ALAPWCSFAILPLFAFSNAGV), 296 to 316 (LIIGKPVGVFLFSYVAVLLGI), 328 to 348 (IFAIAVLCGIGFTMSMFIAGL), and 365 to 385 (LGILMGTFVAAIIGYFLLKIT).

The protein belongs to the NhaA Na(+)/H(+) (TC 2.A.33) antiporter family.

The protein resides in the cell inner membrane. It carries out the reaction Na(+)(in) + 2 H(+)(out) = Na(+)(out) + 2 H(+)(in). Its function is as follows. Na(+)/H(+) antiporter that extrudes sodium in exchange for external protons. The protein is Na(+)/H(+) antiporter NhaA of Actinobacillus pleuropneumoniae serotype 3 (strain JL03).